Reading from the N-terminus, the 304-residue chain is Cbb3-type cytochrome c oxidase subunit CcoP (304 aa).

2 consecutive transmembrane segments (helical) span residues 11–31 (LYVA…LIVA) and 61–81 (WWAG…ALYP). Cytochrome c domains lie at 129–209 (QAMA…LSLS) and 216–296 (VAAQ…WSLS). Positions 142, 145, 146, 185, 228, 231, 232, and 273 each coordinate heme c.

This sequence belongs to the CcoP / FixP family. As to quaternary structure, component of the cbb3-type cytochrome c oxidase at least composed of CcoN, CcoO, CcoQ and CcoP. Requires heme c as cofactor.

It localises to the cell inner membrane. It participates in energy metabolism; oxidative phosphorylation. Functionally, C-type cytochrome. Part of the cbb3-type cytochrome c oxidase complex. CcoP subunit is required for transferring electrons from donor cytochrome c via its heme groups to CcoO subunit. From there, electrons are shuttled to the catalytic binuclear center of CcoN subunit where oxygen reduction takes place. The complex also functions as a proton pump. This is Cbb3-type cytochrome c oxidase subunit CcoP from Rubrivivax gelatinosus (Rhodocyclus gelatinosus).